The sequence spans 32 residues: Delta-conotoxin-like CnVIC (32 aa).

Disulfide bonds link cysteine 3-cysteine 18, cysteine 10-cysteine 22, and cysteine 17-cysteine 27. 4-hydroxyproline is present on residues proline 6 and proline 14.

The protein belongs to the conotoxin O1 superfamily. In terms of tissue distribution, expressed by the venom duct.

The protein resides in the secreted. Functionally, delta-conotoxins bind to site 6 of voltage-gated sodium channels (Nav) and inhibit the inactivation process. This toxin acts on Nav1.2/SCN2A, Nav1.4/SCN4A, Nav1.5/SCN5A (weak activity), Nav1.6/SCN8A (EC(50)=2.5 uM). This is Delta-conotoxin-like CnVIC from Conus consors (Singed cone).